The following is a 289-amino-acid chain: Esterase GA18864 (289 aa).

Over residues 1–19 (MTNNDAAVEAPSSSRASSS) the composition is skewed to low complexity. Residues 1–24 (MTNNDAAVEAPSSSRASSSKQQPK) form a disordered region. Active-site charge relay system residues include serine 133, aspartate 191, and histidine 218. Residues 253 to 289 (VSFIESGAEDNDDDGDANDAEVAAATAAAGSDLDDSD) are disordered. The span at 259 to 271 (GAEDNDDDGDAND) shows a compositional bias: acidic residues. Over residues 272–283 (AEVAAATAAAGS) the composition is skewed to low complexity.

Belongs to the LovG family.

The chain is Esterase GA18864 from Drosophila pseudoobscura pseudoobscura (Fruit fly).